We begin with the raw amino-acid sequence, 426 residues long: Potassium channel subfamily K member 2 (426 aa).

The Cytoplasmic segment spans residues Met1–Thr61. Important for GNG4 binding and L-glutamate release in astrocytes stretches follow at residues Ala17 to Ser38 and Asp51 to Thr61. The helical transmembrane segment at Val62 to Ala82 threads the bilayer. N-linked (GlcNAc...) asparagine glycans are attached at residues Asn110 and Asn134. The pore-forming intramembrane region spans Leu144–Gly170. K(+) is bound by residues Thr157, Ile158, Gly159, and Phe160. Residues Thr157–Asn162 form a selectivity filter 1 region. A helical membrane pass occupies residues Ile172–Val192. The Cytoplasmic portion of the chain corresponds to Gly193–Arg222. The helical transmembrane segment at Ile223–Val243 threads the bilayer. Residues Ala253–Asp283 constitute an intramembrane region (pore-forming). 4 residues coordinate K(+): Thr266, Ile267, Gly268, and Phe269. Residues Thr266 to Asp271 form a selectivity filter 2 region. A helical membrane pass occupies residues Val288–Gly308. Topologically, residues Asp309–Lys426 are cytoplasmic. The interaction with AKAP5 stretch occupies residues Val313–Arg326. Positions Thr337–Ser385 are essential for chloroform and halothane sensitivity. Ser348 is modified (phosphoserine; by PKA).

It belongs to the two pore domain potassium channel (TC 1.A.1.8) family. Homodimer; disulfide-linked. Forms heterodimers with other 2-pore domain K(+) channel subunits, such as KCNK1, KCNK4, KCNK10 and KCNK18. Interacts with AKAP5; the channel is recruited to postsynaptic microdomains by AKAP5 where it can integrate neurotransmitter receptor signals. Part of a complex composed of AKAP5 and ADRB2. Upon AKAP5 binding, the channel is no longer sensitive to intracellular acidification, membrane stretch or arachidonic acid stimuli. Interacts with POPDC1; the interaction enhances KCNK2 surface expression and is inhibited by cAMP. Interacts (via N-terminus) with G-protein subunit GNG4 (via C-terminus); this interaction confers ion selectivity to L-glutamate and Cl(-) anions. In terms of processing, phosphorylation at Ser-348 controls the reversible conversion from a leak channel to a voltage-dependent channel. Expressed in cardiomyocytes (at protein level). Expressed in various brain regions including the lateral olfactory tract, piriform cortex of the forebrain, paraventricular and anteromedial thalamic nuclei, brainstem, caudate putamen, nucleus accumbens, neocortex and interpeduncular nucleus. Detected in astrocytes in hippocampus stratum radiatum. In terms of tissue distribution, expressed in brain and kidney.

The protein localises to the cell membrane. The protein resides in the endoplasmic reticulum membrane. It localises to the cell projection. It is found in the axon. Its subcellular location is the dendrite. The protein localises to the postsynaptic density membrane. The protein resides in the sarcolemma. The catalysed reaction is K(+)(in) = K(+)(out). The enzyme catalyses L-glutamate(out) = L-glutamate(in). It catalyses the reaction chloride(in) = chloride(out). It carries out the reaction Rb(+)(in) = Rb(+)(out). The catalysed reaction is Cs(+)(in) = Cs(+)(out). Its activity is regulated as follows. Activated by various stimuli including intracellular acidic pH, mechanical stretch and polyunsaturated fatty acids such as arachidonic acid. Its function is as follows. K(+) channel that conducts voltage-dependent outward rectifying currents upon membrane depolarization. Voltage sensing is coupled to K(+) electrochemical gradient in an 'ion flux gating' mode where outward but not inward ion flow opens the gate. Converts to voltage-independent 'leak' conductance mode upon stimulation by various stimuli including mechanical membrane stretch, acidic pH, heat and lipids. Reversibly converts between a voltage-insensitive K(+) 'leak' channel and a voltage-dependent outward rectifying K(+) channel in a phosphorylation-dependent manner. Homo- and heterodimerizes to form functional channels with distinct regulatory and gating properties. In trigeminal ganglia sensory neurons, the heterodimer of KCNK2/TREK-1 and KCNK18/TRESK inhibits neuronal firing and neurogenic inflammation by stabilizing the resting membrane potential at K(+) equilibrium potential as well as by regulating the threshold of action potentials and the spike frequency. At trigeminal A-beta afferent nerves, the heterodimer of KCNK2/TREK-1 and KCNK4/TRAAK is mostly coexpressed at nodes of Ranvier where it conducts voltage-independent mechanosensitive and thermosensitive currents, allowing rapid action potential repolarization, high speed and high frequence saltatory conduction on myelinated nerves to ensure prompt sensory responses. In hippocampal astrocytes, the heterodimer of KCNK2/TREK-1 and KCNK1/TWIK-1 allows passive K(+) conductance under basal conditions, but changes ion selectivity and becomes permeable to L-glutamate and Cl(-) ions upon binding to G-protein subunit GNG4 in stimulated astrocytes. Mediates rapid L-glutamate release in response to activation of G-protein-coupled receptors such as F2R and CNR1. In hippocampal pyramidal neurons, the homodimer of KCNK2/TREK-1 contributes to gamma-aminobutyric acid (GABA) B-induced slow inhibitory postsynaptic potential. Associates with AKAP5 and Gs-protein-coupled receptor B2AR at postsynaptic dense bodies and converts to a leak channel no longer sensitive to stimulation by arachidonic acid, acidic pH or mechanical stress, nor inhibited by Gq-coupled receptors but still under the negative control of Gs-coupled receptors. Permeable to other monovalent cations such as Rb(+) and Cs(+). In terms of biological role, does not display channel activity but reduces the channel activity of isoform 1, isoform 2 and isoform 4 and reduces cell surface expression of isoform 2. In Rattus norvegicus (Rat), this protein is Potassium channel subfamily K member 2.